The chain runs to 419 residues: Transcription termination factor Rho (419 aa).

Residues 48-123 (DIFGDGVLEI…LKVNEVNYDK (76 aa)) form the Rho RNA-BD domain. 3 RNA-binding regions span residues 61-66 (GFGFLR), 78-80 (DIY), and 108-110 (ERY). ATP contacts are provided by residues 169–174 (GRGQRG), 181–186 (KAGKTI), and Arg212. An RNA-binding 2 region spans residues 284–288 (VLTGG).

Belongs to the Rho family. In terms of assembly, homohexamer. The homohexamer assembles into an open ring structure.

In terms of biological role, facilitates transcription termination by a mechanism that involves Rho binding to the nascent RNA, activation of Rho's RNA-dependent ATPase activity, and release of the mRNA from the DNA template. This Buchnera aphidicola subsp. Acyrthosiphon pisum (strain APS) (Acyrthosiphon pisum symbiotic bacterium) protein is Transcription termination factor Rho.